Here is a 351-residue protein sequence, read N- to C-terminus: Protein RecA (351 aa).

73 to 80 contacts ATP; the sequence is GPESSGKT.

Belongs to the RecA family.

It is found in the cytoplasm. Functionally, can catalyze the hydrolysis of ATP in the presence of single-stranded DNA, the ATP-dependent uptake of single-stranded DNA by duplex DNA, and the ATP-dependent hybridization of homologous single-stranded DNAs. It interacts with LexA causing its activation and leading to its autocatalytic cleavage. The protein is Protein RecA of Herbaspirillum seropedicae.